A 430-amino-acid polypeptide reads, in one-letter code: Pyrroloquinoline quinone-dependent sugar dehydrogenase (430 aa).

The signal sequence occupies residues 1 to 23 (MARLAPHTLLLALFVFLFGSCTA). N-linked (GlcNAc...) asparagine glycosylation occurs at Asn25. Arg57 lines the pyrroloquinoline quinone pocket. Asn94 and Asn147 each carry an N-linked (GlcNAc...) asparagine glycan. His153 provides a ligand contact to pyrroloquinoline quinone. Residue Asn184 is glycosylated (N-linked (GlcNAc...) asparagine). A pyrroloquinoline quinone-binding site is contributed by Arg220. Residues Ser240 and Asp242 each contribute to the Ca(2+) site. A disulfide bond links Cys281 and Cys316. A glycan (N-linked (GlcNAc...) asparagine) is linked at Asn306. A pyrroloquinoline quinone-binding site is contributed by His330. N-linked (GlcNAc...) asparagine glycosylation is present at Asn341. His350 contributes to the pyrroloquinoline quinone binding site. A disulfide bridge links Cys388 with Cys392.

The protein belongs to the sugar dehydrogenase AA12 family. Requires Ca(2+) as cofactor. It depends on pyrroloquinoline quinone as a cofactor.

The protein resides in the secreted. Pyrroloquinoline quinone (PPQ)-dependent oxidoreductase that catalyzes the oxidation of various sugars such as L-fucose. This Hypocrea jecorina (strain QM6a) (Trichoderma reesei) protein is Pyrroloquinoline quinone-dependent sugar dehydrogenase.